We begin with the raw amino-acid sequence, 517 residues long: Optineurin (517 aa).

Coiled-coil stretches lie at residues 15-127 and 174-453; these read NLGS…DLVA and KAES…LGRH. Disordered regions lie at residues 216 to 237 and 454 to 488; these read KLEHADSSAQTSLPSAAETNAS and SMSEMQRRHVPRGANPQGPTAPNNLPGGRGEWQQQ. Residues 222–237 show a composition bias toward polar residues; that stretch reads SSAQTSLPSAAETNAS. The segment at 487–517 adopts a CCHC NOA-type zinc-finger fold; it reads QQNIPDHACPKCGEVLPDLDSLQIHIMDCII. Zn(2+)-binding residues include C495, C498, H511, and C515.

Its subcellular location is the cytoplasm. The protein resides in the perinuclear region. The protein localises to the golgi apparatus. It is found in the trans-Golgi network. It localises to the cytoplasmic vesicle. Its subcellular location is the recycling endosome. The protein resides in the autophagosome. Probably part of the TNF-alpha signaling pathway that can shift the equilibrium toward induction of cell death. May act by regulating membrane trafficking and cellular morphogenesis. In Danio rerio (Zebrafish), this protein is Optineurin (optn).